Consider the following 442-residue polypeptide: Probable carboxypeptidase PADG_04062 (442 aa).

Positions 1-20 (MKLQYLVALLSVQAVPPVTA) are cleaved as a signal peptide. N-linked (GlcNAc...) asparagine glycosylation is present at Asn-102. Asp-160 contributes to the Zn(2+) binding site. The Proton acceptor role is filled by Glu-192. Residue Glu-193 participates in Zn(2+) binding. Asn-343 carries an N-linked (GlcNAc...) asparagine glycan.

The protein belongs to the peptidase M20A family. Requires Zn(2+) as cofactor.

The protein resides in the secreted. This chain is Probable carboxypeptidase PADG_04062, found in Paracoccidioides brasiliensis (strain Pb18).